Here is a 113-residue protein sequence, read N- to C-terminus: Cell cycle protein GpsB (113 aa).

A coiled-coil region spans residues 36-68; that stretch reads LDMVIKDYSTFTQEIEALQAENIRLVQELDNAP.

This sequence belongs to the GpsB family. In terms of assembly, forms polymers through the coiled coil domains. Interacts with PBP1, MreC and EzrA.

It localises to the cytoplasm. In terms of biological role, divisome component that associates with the complex late in its assembly, after the Z-ring is formed, and is dependent on DivIC and PBP2B for its recruitment to the divisome. Together with EzrA, is a key component of the system that regulates PBP1 localization during cell cycle progression. Its main role could be the removal of PBP1 from the cell pole after pole maturation is completed. Also contributes to the recruitment of PBP1 to the division complex. Not essential for septum formation. This is Cell cycle protein GpsB from Listeria monocytogenes serotype 4b (strain CLIP80459).